Reading from the N-terminus, the 319-residue chain is Annexin A4 (319 aa).

Ala-2 bears the N-acetylalanine mark. Phosphothreonine is present on Thr-7. Ser-12 is subject to Phosphoserine. Annexin repeat units lie at residues 14-85 (FNAM…GMMT), 86-157 (PTVL…SLSA), 169-241 (ALVR…AIVK), and 245-316 (NKSA…VLCG). N6-acetyllysine is present on residues Lys-213, Lys-293, and Lys-300.

The protein belongs to the annexin family.

The protein localises to the zymogen granule membrane. Its function is as follows. Calcium/phospholipid-binding protein which promotes membrane fusion and is involved in exocytosis. The polypeptide is Annexin A4 (Homo sapiens (Human)).